The sequence spans 354 residues: Photosystem II D2 protein (354 aa).

N-acetylthreonine is present on T2. Phosphothreonine is present on T2. Residues 42 to 62 (CAYFALGGFFTGNTFVTSWYT) form a helical membrane-spanning segment. Position 119 (H119) interacts with chlorophyll a. The chain crosses the membrane as a helical span at residues 126-142 (GFMLRQFEIARAVKIRP). Residues Q131 and N144 each coordinate pheophytin a. The chain crosses the membrane as a helical span at residues 154-167 (VFVSVFLIYPLGQQ). Residue H199 participates in chlorophyll a binding. Residues 209-229 (AALLCAIHGATVENTLFEDGD) form a helical membrane-spanning segment. The a plastoquinone site is built by H216 and F263. Position 216 (H216) interacts with Fe cation. A Fe cation-binding site is contributed by H270. The helical transmembrane segment at 280–296 (GLWMSAIGVVGLALNLR) threads the bilayer.

It belongs to the reaction center PufL/M/PsbA/D family. In terms of assembly, PSII is composed of 1 copy each of membrane proteins PsbA, PsbB, PsbC, PsbD, PsbE, PsbF, PsbH, PsbI, PsbJ, PsbK, PsbL, PsbM, PsbT, PsbX, PsbY, PsbZ, Psb30/Ycf12, at least 3 peripheral proteins of the oxygen-evolving complex and a large number of cofactors. It forms dimeric complexes. The cofactor is The D1/D2 heterodimer binds P680, chlorophylls that are the primary electron donor of PSII, and subsequent electron acceptors. It shares a non-heme iron and each subunit binds pheophytin, quinone, additional chlorophylls, carotenoids and lipids. There is also a Cl(-1) ion associated with D1 and D2, which is required for oxygen evolution. The PSII complex binds additional chlorophylls, carotenoids and specific lipids..

It localises to the plastid. The protein localises to the chloroplast thylakoid membrane. The catalysed reaction is 2 a plastoquinone + 4 hnu + 2 H2O = 2 a plastoquinol + O2. Photosystem II (PSII) is a light-driven water:plastoquinone oxidoreductase that uses light energy to abstract electrons from H(2)O, generating O(2) and a proton gradient subsequently used for ATP formation. It consists of a core antenna complex that captures photons, and an electron transfer chain that converts photonic excitation into a charge separation. The D1/D2 (PsbA/PsbD) reaction center heterodimer binds P680, the primary electron donor of PSII as well as several subsequent electron acceptors. D2 is needed for assembly of a stable PSII complex. This Mesostigma viride (Green alga) protein is Photosystem II D2 protein.